We begin with the raw amino-acid sequence, 562 residues long: NAD-dependent malic enzyme (562 aa).

Tyr101 acts as the Proton donor in catalysis. Arg154 contributes to the NAD(+) binding site. The active-site Proton acceptor is Lys172. Glu243, Asp244, and Asp267 together coordinate a divalent metal cation. NAD(+) contacts are provided by Asp267 and Asn415.

It belongs to the malic enzymes family. Homotetramer. Mg(2+) serves as cofactor. The cofactor is Mn(2+).

The enzyme catalyses (S)-malate + NAD(+) = pyruvate + CO2 + NADH. The catalysed reaction is oxaloacetate + H(+) = pyruvate + CO2. The sequence is that of NAD-dependent malic enzyme from Shewanella frigidimarina (strain NCIMB 400).